Reading from the N-terminus, the 128-residue chain is Large ribosomal subunit protein bL17 (128 aa).

Belongs to the bacterial ribosomal protein bL17 family. As to quaternary structure, part of the 50S ribosomal subunit. Contacts protein L32.

The sequence is that of Large ribosomal subunit protein bL17 from Pseudomonas savastanoi pv. phaseolicola (strain 1448A / Race 6) (Pseudomonas syringae pv. phaseolicola (strain 1448A / Race 6)).